We begin with the raw amino-acid sequence, 947 residues long: Translation initiation factor IF-2 (947 aa).

The segment at 61-284 is disordered; it reads IQANQPAKNP…TAKNNKSHKI (224 aa). Over residues 151 to 169 the composition is skewed to basic and acidic residues; the sequence is QIEKAKQKLQEIQKSREAL. Positions 175-188 are enriched in low complexity; it reads SNANNANSTNNANN. Residues 189-206 show a composition bias toward basic and acidic residues; the sequence is AKKEISEVKKQEQEIKRH. A compositionally biased stretch (basic residues) spans 207-218; the sequence is ENIKRRTGFRVI. The span at 247–262 shows a compositional bias: basic and acidic residues; the sequence is EDIKKEWQEKDKQEAK. The tr-type G domain occupies 446–615; it reads ERPPVVTIMG…LIQADIMELK (170 aa). The tract at residues 455–462 is G1; sequence GHVDHGKT. 455 to 462 is a binding site for GTP; sequence GHVDHGKT. Positions 480 to 484 are G2; the sequence is GITQH. Residues 501 to 504 form a G3 region; the sequence is DTPG. Residues 501-505 and 555-558 contribute to the GTP site; these read DTPGH and NKMD. Residues 555 to 558 form a G4 region; sequence NKMD. The G5 stretch occupies residues 591 to 593; it reads SAK.

Belongs to the TRAFAC class translation factor GTPase superfamily. Classic translation factor GTPase family. IF-2 subfamily.

The protein localises to the cytoplasm. One of the essential components for the initiation of protein synthesis. Protects formylmethionyl-tRNA from spontaneous hydrolysis and promotes its binding to the 30S ribosomal subunits. Also involved in the hydrolysis of GTP during the formation of the 70S ribosomal complex. In Helicobacter pylori (strain P12), this protein is Translation initiation factor IF-2.